Consider the following 389-residue polypeptide: Succinate--CoA ligase [ADP-forming] subunit beta (389 aa).

Positions Lys-9 to Thr-244 constitute an ATP-grasp domain. ATP contacts are provided by residues Lys-46, Gly-53–Gly-55, Gly-102, and Glu-107. Asn-199 and Asp-213 together coordinate Mg(2+). Substrate is bound by residues Asn-264 and Gly-321–Val-323.

The protein belongs to the succinate/malate CoA ligase beta subunit family. Heterotetramer of two alpha and two beta subunits. It depends on Mg(2+) as a cofactor.

It carries out the reaction succinate + ATP + CoA = succinyl-CoA + ADP + phosphate. It catalyses the reaction GTP + succinate + CoA = succinyl-CoA + GDP + phosphate. It functions in the pathway carbohydrate metabolism; tricarboxylic acid cycle; succinate from succinyl-CoA (ligase route): step 1/1. Functionally, succinyl-CoA synthetase functions in the citric acid cycle (TCA), coupling the hydrolysis of succinyl-CoA to the synthesis of either ATP or GTP and thus represents the only step of substrate-level phosphorylation in the TCA. The beta subunit provides nucleotide specificity of the enzyme and binds the substrate succinate, while the binding sites for coenzyme A and phosphate are found in the alpha subunit. In Xanthomonas euvesicatoria pv. vesicatoria (strain 85-10) (Xanthomonas campestris pv. vesicatoria), this protein is Succinate--CoA ligase [ADP-forming] subunit beta.